Consider the following 443-residue polypeptide: Thymidine phosphorylase (443 aa).

This sequence belongs to the thymidine/pyrimidine-nucleoside phosphorylase family. As to quaternary structure, homodimer.

It carries out the reaction thymidine + phosphate = 2-deoxy-alpha-D-ribose 1-phosphate + thymine. The protein operates within pyrimidine metabolism; dTMP biosynthesis via salvage pathway; dTMP from thymine: step 1/2. Functionally, the enzymes which catalyze the reversible phosphorolysis of pyrimidine nucleosides are involved in the degradation of these compounds and in their utilization as carbon and energy sources, or in the rescue of pyrimidine bases for nucleotide synthesis. In Shewanella sediminis (strain HAW-EB3), this protein is Thymidine phosphorylase.